A 448-amino-acid polypeptide reads, in one-letter code: Homogentisate 1,2-dioxygenase (448 aa).

The interval 1–26 is disordered; it reads MNMLAPAAKNAFTPASPDRPAYQSGF. Catalysis depends on His302, which acts as the Proton acceptor. Residues His345 and Glu351 each contribute to the Fe cation site. Homogentisate contacts are provided by Tyr360 and His381. A Fe cation-binding site is contributed by His381.

This sequence belongs to the homogentisate dioxygenase family. As to quaternary structure, hexamer; dimer of trimers. The cofactor is Fe cation.

It catalyses the reaction homogentisate + O2 = 4-maleylacetoacetate + H(+). It functions in the pathway amino-acid degradation; L-phenylalanine degradation; acetoacetate and fumarate from L-phenylalanine: step 4/6. Its function is as follows. Involved in the catabolism of homogentisate (2,5-dihydroxyphenylacetate or 2,5-OH-PhAc), a central intermediate in the degradation of phenylalanine and tyrosine. Catalyzes the oxidative ring cleavage of the aromatic ring of homogentisate to yield maleylacetoacetate. In Ralstonia nicotianae (strain ATCC BAA-1114 / GMI1000) (Ralstonia solanacearum), this protein is Homogentisate 1,2-dioxygenase.